Here is a 370-residue protein sequence, read N- to C-terminus: Homoserine O-acetyltransferase (370 aa).

The AB hydrolase-1 domain maps to 44 to 350; the sequence is NAILVAHAWT…AYGHDAFLLE (307 aa). Ser150 (nucleophile) is an active-site residue. Substrate is bound at residue Arg217. Residues Asp311 and His344 contribute to the active site. Asp345 provides a ligand contact to substrate.

Belongs to the AB hydrolase superfamily. MetX family. Homodimer.

It localises to the cytoplasm. The enzyme catalyses L-homoserine + acetyl-CoA = O-acetyl-L-homoserine + CoA. It participates in amino-acid biosynthesis; L-methionine biosynthesis via de novo pathway; O-acetyl-L-homoserine from L-homoserine: step 1/1. Its function is as follows. Transfers an acetyl group from acetyl-CoA to L-homoserine, forming acetyl-L-homoserine. The chain is Homoserine O-acetyltransferase from Geotalea uraniireducens (strain Rf4) (Geobacter uraniireducens).